The primary structure comprises 555 residues: Beta-hexosaminidase A (555 aa).

The signal sequence occupies residues Met-1–Thr-18. Asn-47 carries an N-linked (GlcNAc...) asparagine glycan. Glu-325 (proton donor) is an active-site residue. Residues Asn-351, Asn-412, and Asn-460 are each glycosylated (N-linked (GlcNAc...) asparagine).

This sequence belongs to the glycosyl hydrolase 20 family. As to expression, expressed in coelomocytes and neurons of the pharyngeal region and nerve cord.

It is found in the lysosome. The catalysed reaction is Hydrolysis of terminal non-reducing N-acetyl-D-hexosamine residues in N-acetyl-beta-D-hexosaminides.. Functionally, responsible for the degradation of GM2 gangliosides, and a variety of other molecules containing terminal N-acetyl hexosamines. Degrades chitotriose. This is Beta-hexosaminidase A (hex-1) from Caenorhabditis elegans.